Reading from the N-terminus, the 477-residue chain is Cysteine--tRNA ligase (477 aa).

Cys-28 contacts Zn(2+). The short motif at 30 to 40 (PTVYDYAHIGN) is the 'HIGH' region element. Residues Cys-213, His-238, and Glu-242 each coordinate Zn(2+). The short motif at 270–274 (KMSKS) is the 'KMSKS' region element. Lys-273 is an ATP binding site.

This sequence belongs to the class-I aminoacyl-tRNA synthetase family. Monomer. Zn(2+) is required as a cofactor.

The protein localises to the cytoplasm. It carries out the reaction tRNA(Cys) + L-cysteine + ATP = L-cysteinyl-tRNA(Cys) + AMP + diphosphate. The protein is Cysteine--tRNA ligase of Chlamydia trachomatis serovar A (strain ATCC VR-571B / DSM 19440 / HAR-13).